A 150-amino-acid polypeptide reads, in one-letter code: Ribonuclease H (150 aa).

Residues 1–142 (MSDSVELFTD…ADQLANRGVD (142 aa)) form the RNase H type-1 domain. Mg(2+) is bound by residues aspartate 10, glutamate 48, aspartate 70, and aspartate 134.

This sequence belongs to the RNase H family. Monomer. Mg(2+) is required as a cofactor.

The protein localises to the cytoplasm. It catalyses the reaction Endonucleolytic cleavage to 5'-phosphomonoester.. In terms of biological role, endonuclease that specifically degrades the RNA of RNA-DNA hybrids. This chain is Ribonuclease H, found in Pseudomonas syringae pv. syringae (strain B728a).